We begin with the raw amino-acid sequence, 503 residues long: Probable cytosol aminopeptidase (503 aa).

Mn(2+)-binding residues include Lys270 and Asp275. Lys282 is an active-site residue. Asp293, Asp352, and Glu354 together coordinate Mn(2+). Arg356 is a catalytic residue.

This sequence belongs to the peptidase M17 family. It depends on Mn(2+) as a cofactor.

It is found in the cytoplasm. It carries out the reaction Release of an N-terminal amino acid, Xaa-|-Yaa-, in which Xaa is preferably Leu, but may be other amino acids including Pro although not Arg or Lys, and Yaa may be Pro. Amino acid amides and methyl esters are also readily hydrolyzed, but rates on arylamides are exceedingly low.. The catalysed reaction is Release of an N-terminal amino acid, preferentially leucine, but not glutamic or aspartic acids.. In terms of biological role, presumably involved in the processing and regular turnover of intracellular proteins. Catalyzes the removal of unsubstituted N-terminal amino acids from various peptides. In Shigella boydii serotype 4 (strain Sb227), this protein is Probable cytosol aminopeptidase.